We begin with the raw amino-acid sequence, 325 residues long: Aldo-keto reductase family 1 member A1 (325 aa).

N-acetylthreonine is present on Thr-2. Phosphoserine is present on Ser-4. NADP(+) contacts are provided by residues 11–20 (GQKMPLIGLG), Thr-21, and Trp-22. Lys-23 carries an N-linked (Glc) (glycation) lysine glycan. Residue Ser-38 is modified to Phosphoserine. Residue Asp-45 participates in NADP(+) binding. Tyr-50 acts as the Proton donor in catalysis. N-linked (Glc) (glycation) lysine glycosylation is found at Lys-68 and Lys-85. The residue at position 127 (Lys-127) is an N6-acetyllysine; alternate. Lys-127 is modified (N6-succinyllysine; alternate). Lys-141 carries an N-linked (Glc) (glycation) lysine glycan. Position 145 is an N6-succinyllysine (Lys-145). N-linked (Glc) (glycation) lysine glycosylation is present at Lys-153. Residues Ser-162, Asn-163, Ser-211, Leu-213, Ser-215, Ser-216, Lys-263, Ser-264, Ile-265, Thr-266, Arg-269, Gln-272, and Asn-273 each coordinate NADP(+). Ser-211 carries the post-translational modification Phosphoserine.

Belongs to the aldo/keto reductase family. In terms of assembly, monomer. Widely expressed.

The protein localises to the cytoplasm. The protein resides in the cytosol. Its subcellular location is the apical cell membrane. The catalysed reaction is a primary alcohol + NADP(+) = an aldehyde + NADPH + H(+). The enzyme catalyses L-gulonate + NADP(+) = aldehydo-D-glucuronate + NADPH + H(+). It catalyses the reaction L-gulono-1,4-lactone + NADP(+) = D-glucurono-3,6-lactone + NADPH + H(+). It carries out the reaction allyl alcohol + NADP(+) = acrolein + NADPH + H(+). The catalysed reaction is glycerol + NADP(+) = D-glyceraldehyde + NADPH + H(+). The enzyme catalyses glycerol + NADP(+) = L-glyceraldehyde + NADPH + H(+). It catalyses the reaction hydroxyacetone + NADP(+) = methylglyoxal + NADPH + H(+). It carries out the reaction 3-deoxyfructose + NADP(+) = 3-deoxyglucosone + NADPH + H(+). The catalysed reaction is (R)-mevalonate + NADP(+) = (R)-mevaldate + NADPH + H(+). The enzyme catalyses pyridine 3-methanol + NADP(+) = pyridine-3-carbaldehyde + NADPH + H(+). It catalyses the reaction S-nitroso-CoA + NADPH + H(+) = sulfinamide-CoA + NADP(+). It carries out the reaction S-nitrosoglutathione + NADPH + H(+) = S-(hydroxysulfenamide)glutathione + NADP(+). In terms of biological role, catalyzes the NADPH-dependent reduction of a wide variety of carbonyl-containing compounds to their corresponding alcohols. Displays enzymatic activity towards endogenous metabolites such as aromatic and aliphatic aldehydes, ketones, monosaccharides and bile acids. Plays an important role in ascorbic acid biosynthesis by catalyzing the reduction of D-glucuronic acid and D-glucurono-gamma-lactone. Functions as a detoxifiying enzyme by reducing a range of toxic aldehydes. Reduces methylglyoxal and 3-deoxyglucosone, which are present at elevated levels under hyperglycemic conditions and are cytotoxic. Involved also in the detoxification of lipid-derived aldehydes like acrolein. Plays a role in the activation of procarcinogens, such as polycyclic aromatic hydrocarbon trans-dihydrodiols, and in the metabolism of various xenobiotics and drugs. Also acts as an inhibitor of protein S-nitrosylation by mediating degradation of S-nitroso-coenzyme A (S-nitroso-CoA), a cofactor required to S-nitrosylate proteins. S-nitroso-CoA reductase activity is involved in reprogramming intermediary metabolism in renal proximal tubules, notably by inhibiting protein S-nitrosylation of isoform 2 of PKM (PKM2). Also acts as a S-nitroso-glutathione reductase by catalyzing the NADPH-dependent reduction of S-nitrosoglutathione. Displays no reductase activity towards retinoids. The sequence is that of Aldo-keto reductase family 1 member A1 (Akr1a1) from Rattus norvegicus (Rat).